Here is a 337-residue protein sequence, read N- to C-terminus: Transmembrane protein 120B (337 aa).

A coiled-coil region spans residues 1–39 (MSLERCQSEWTEIEQEYQQLQETHKVYRQKLEELTNLQA). 6 consecutive transmembrane segments (helical) span residues 100 to 122 (GLYL…AKFA), 130 to 150 (FKLY…FLLN), 157 to 175 (IFNF…RESI), 185 to 205 (GWWV…LTWP), 268 to 288 (FLLP…VTLF), and 300 to 320 (QVFM…LTTL).

It belongs to the TMEM120 family.

The protein resides in the nucleus inner membrane. Necessary for efficient adipogenesis. Does not show ion channel activity. This chain is Transmembrane protein 120B (tmem120b), found in Danio rerio (Zebrafish).